We begin with the raw amino-acid sequence, 112 residues long: Probable 4-amino-4-deoxy-L-arabinose-phosphoundecaprenol flippase subunit ArnE (112 aa).

One can recognise an EamA domain in the interval 35 to 110; sequence RHILFWLGMA…IVVGIVILGT (76 aa). 3 consecutive transmembrane segments (helical) span residues 37 to 57, 66 to 86, and 89 to 109; these read ILFW…LWLS, IAYP…WGIW, and PVAR…VILG.

Belongs to the ArnE family. Heterodimer of ArnE and ArnF.

The protein localises to the cell inner membrane. It participates in bacterial outer membrane biogenesis; lipopolysaccharide biosynthesis. Functionally, translocates 4-amino-4-deoxy-L-arabinose-phosphoundecaprenol (alpha-L-Ara4N-phosphoundecaprenol) from the cytoplasmic to the periplasmic side of the inner membrane. The protein is Probable 4-amino-4-deoxy-L-arabinose-phosphoundecaprenol flippase subunit ArnE of Klebsiella pneumoniae (strain 342).